The following is a 101-amino-acid chain: Transcription and mRNA export factor SUS1 (101 aa).

The protein belongs to the ENY2 family. Component of the nuclear pore complex (NPC)-associated TREX-2 complex (transcription and export complex 2), composed of at least SUS1, SAC3, THP1, SEM1, and CDC31. TREX-2 contains 2 SUS1 chains. The TREX-2 complex interacts with the nucleoporin NUP1. Component of the 1.8 MDa SAGA transcription coactivator-HAT complex. SAGA is built of 5 distinct domains with specialized functions. Within the SAGA complex, SUS1, SGF11, SGF73 and UBP8 form an additional subcomplex of SAGA called the DUB module (deubiquitination module). Interacts directly with THP1, SAC3, SGF11, and with the RNA polymerase II.

The protein localises to the nucleus. It is found in the nucleoplasm. It localises to the cytoplasm. Its subcellular location is the P-body. In terms of biological role, involved in mRNA export coupled transcription activation by association with both the TREX-2 and the SAGA complexes. At the promoters, SAGA is required for recruitment of the basal transcription machinery. It influences RNA polymerase II transcriptional activity through different activities such as TBP interaction and promoter selectivity, interaction with transcription activators, and chromatin modification through histone acetylation and deubiquitination. Within the SAGA complex, participates in a subcomplex required for deubiquitination of H2B and for the maintenance of steady-state H3 methylation levels. The TREX-2 complex functions in docking export-competent ribonucleoprotein particles (mRNPs) to the nuclear entrance of the nuclear pore complex (nuclear basket). TREX-2 participates in mRNA export and accurate chromatin positioning in the nucleus by tethering genes to the nuclear periphery. May also be involved in cytoplasmic mRNA decay by interaction with components of P-bodies. This chain is Transcription and mRNA export factor SUS1, found in Debaryomyces hansenii (strain ATCC 36239 / CBS 767 / BCRC 21394 / JCM 1990 / NBRC 0083 / IGC 2968) (Yeast).